An 882-amino-acid polypeptide reads, in one-letter code: Dual specificity tyrosine-phosphorylation-regulated kinase mbk-1 (882 aa).

Residues Met1–Cys42 show a composition bias toward polar residues. 4 disordered regions span residues Met1–Glu45, Gln62–Phe81, Lys212–Thr239, and Asn255–Asp308. Positions Gln64–Gln79 are enriched in low complexity. Residues Lys220–Lys231 are compositionally biased toward basic and acidic residues. The span at Gln290–Asp308 shows a compositional bias: low complexity. Positions Ile328–Leu649 constitute a Protein kinase domain. ATP contacts are provided by residues Val334–Val342 and Lys357. The Proton acceptor role is filled by Asp456. Disordered regions lie at residues His742–Gln761 and Gln789–Leu882. 2 stretches are compositionally biased toward low complexity: residues Gln747–Gln761 and Gln789–Gln810. A compositionally biased stretch (basic and acidic residues) spans Arg816 to Phe827. The span at Ser843–Asn869 shows a compositional bias: polar residues.

The protein belongs to the protein kinase superfamily. CMGC Ser/Thr protein kinase family. MNB/DYRK subfamily. Mg(2+) is required as a cofactor. As to expression, expressed in all somatic cells.

Its subcellular location is the nucleus. It catalyses the reaction L-seryl-[protein] + ATP = O-phospho-L-seryl-[protein] + ADP + H(+). The enzyme catalyses L-threonyl-[protein] + ATP = O-phospho-L-threonyl-[protein] + ADP + H(+). The catalysed reaction is L-tyrosyl-[protein] + ATP = O-phospho-L-tyrosyl-[protein] + ADP + H(+). In terms of biological role, possible role in the function of olfactory neurons. The sequence is that of Dual specificity tyrosine-phosphorylation-regulated kinase mbk-1 from Caenorhabditis elegans.